Consider the following 1400-residue polypeptide: DNA-directed RNA polymerase subunit beta' (1400 aa).

C70, C72, C85, and C88 together coordinate Zn(2+). 3 residues coordinate Mg(2+): D460, D462, and D464. Zn(2+) contacts are provided by C814, C888, C895, and C898. The segment at 1368–1400 (RQAKRAEAQEGPSAEQATDNLAALLNAGFSSDE) is disordered.

Belongs to the RNA polymerase beta' chain family. In terms of assembly, the RNAP catalytic core consists of 2 alpha, 1 beta, 1 beta' and 1 omega subunit. When a sigma factor is associated with the core the holoenzyme is formed, which can initiate transcription. Mg(2+) serves as cofactor. Zn(2+) is required as a cofactor.

The catalysed reaction is RNA(n) + a ribonucleoside 5'-triphosphate = RNA(n+1) + diphosphate. Functionally, DNA-dependent RNA polymerase catalyzes the transcription of DNA into RNA using the four ribonucleoside triphosphates as substrates. The sequence is that of DNA-directed RNA polymerase subunit beta' from Vibrio parahaemolyticus serotype O3:K6 (strain RIMD 2210633).